A 913-amino-acid polypeptide reads, in one-letter code: ER degradation-enhancing alpha-mannosidase-like protein 3 (913 aa).

The signal sequence occupies residues 1–15 (MGCPAVEARRWGDMW). A glycan (N-linked (GlcNAc...) asparagine) is linked at asparagine 104. Glutamate 132 functions as the Proton donor in the catalytic mechanism. A glycan (N-linked (GlcNAc...) asparagine) is linked at asparagine 181. Aspartate 279 is an active-site residue. The Proton donor role is filled by glutamate 373. Glutamate 391 is an active-site residue. Threonine 477 lines the Ca(2+) pocket. The N-linked (GlcNAc...) asparagine glycan is linked to asparagine 497. In terms of domain architecture, PA spans 660-766 (LSKHLAGAQG…KEGNIILDAI (107 aa)). Asparagine 797 carries N-linked (GlcNAc...) asparagine glycosylation. The interval 823-895 (EESPVSQPEV…NKVQPMESIL (73 aa)) is disordered. Residues 826 to 839 (PVSQPEVPSSDSPS) show a composition bias toward low complexity. A compositionally biased stretch (basic and acidic residues) spans 843–866 (RTSERDITPESQEHKTEETEHSPK). A Prevents secretion from ER motif is present at residues 910 to 913 (KDEL).

It belongs to the glycosyl hydrolase 47 family. Ca(2+) serves as cofactor.

The protein resides in the endoplasmic reticulum lumen. It carries out the reaction N(4)-(alpha-D-Man-(1-&gt;2)-alpha-D-Man-(1-&gt;2)-alpha-D-Man-(1-&gt;3)-[alpha-D-Man-(1-&gt;2)-alpha-D-Man-(1-&gt;3)-[alpha-D-Man-(1-&gt;2)-alpha-D-Man-(1-&gt;6)]-alpha-D-Man-(1-&gt;6)]-beta-D-Man-(1-&gt;4)-beta-D-GlcNAc-(1-&gt;4)-beta-D-GlcNAc)-L-asparaginyl-[protein] (N-glucan mannose isomer 9A1,2,3B1,2,3) + 4 H2O = N(4)-(alpha-D-Man-(1-&gt;3)-[alpha-D-Man-(1-&gt;3)-[alpha-D-Man-(1-&gt;6)]-alpha-D-Man-(1-&gt;6)]-beta-D-Man-(1-&gt;4)-beta-D-GlcNAc-(1-&gt;4)-beta-D-GlcNAc)-L-asparaginyl-[protein] (N-glucan mannose isomer 5A1,2) + 4 beta-D-mannose. The enzyme catalyses N(4)-(alpha-D-Man-(1-&gt;2)-alpha-D-Man-(1-&gt;2)-alpha-D-Man-(1-&gt;3)-[alpha-D-Man-(1-&gt;3)-[alpha-D-Man-(1-&gt;2)-alpha-D-Man-(1-&gt;6)]-alpha-D-Man-(1-&gt;6)]-beta-D-Man-(1-&gt;4)-beta-D-GlcNAc-(1-&gt;4)-beta-D-GlcNAc)-L-asparaginyl-[protein] (N-glucan mannose isomer 8A1,2,3B1,3) + 3 H2O = N(4)-(alpha-D-Man-(1-&gt;3)-[alpha-D-Man-(1-&gt;3)-[alpha-D-Man-(1-&gt;6)]-alpha-D-Man-(1-&gt;6)]-beta-D-Man-(1-&gt;4)-beta-D-GlcNAc-(1-&gt;4)-beta-D-GlcNAc)-L-asparaginyl-[protein] (N-glucan mannose isomer 5A1,2) + 3 beta-D-mannose. It functions in the pathway protein modification; protein glycosylation. In terms of biological role, may be involved in endoplasmic reticulum-associated degradation (ERAD). This Xenopus laevis (African clawed frog) protein is ER degradation-enhancing alpha-mannosidase-like protein 3 (edem3).